The following is a 120-amino-acid chain: NAD(P)H-quinone oxidoreductase subunit 3, chloroplastic (120 aa).

A run of 3 helical transmembrane segments spans residues isoleucine 9–glycine 29, methionine 64–methionine 84, and valine 88–serine 108.

The protein belongs to the complex I subunit 3 family. In terms of assembly, NDH is composed of at least 16 different subunits, 5 of which are encoded in the nucleus.

Its subcellular location is the plastid. It is found in the chloroplast thylakoid membrane. It catalyses the reaction a plastoquinone + NADH + (n+1) H(+)(in) = a plastoquinol + NAD(+) + n H(+)(out). It carries out the reaction a plastoquinone + NADPH + (n+1) H(+)(in) = a plastoquinol + NADP(+) + n H(+)(out). Its function is as follows. NDH shuttles electrons from NAD(P)H:plastoquinone, via FMN and iron-sulfur (Fe-S) centers, to quinones in the photosynthetic chain and possibly in a chloroplast respiratory chain. The immediate electron acceptor for the enzyme in this species is believed to be plastoquinone. Couples the redox reaction to proton translocation, and thus conserves the redox energy in a proton gradient. The chain is NAD(P)H-quinone oxidoreductase subunit 3, chloroplastic from Liriodendron tulipifera (Tuliptree).